A 72-amino-acid chain; its full sequence is Crustacean hyperglycemic hormone (72 aa).

Gln1 carries the post-translational modification Pyrrolidone carboxylic acid; partial. Intrachain disulfides connect Cys7–Cys43, Cys23–Cys39, and Cys26–Cys52. A Valine amide modification is found at Val72.

Belongs to the arthropod CHH/MIH/GIH/VIH hormone family. The N-terminus forms pyrrolidone carboxylic acid in isoform CHH-II and is free in isoform CHH-I. Produced by the medulla terminalis X-organ in the eyestalks and transported to the sinus gland where they are stored and released.

Its subcellular location is the secreted. Functionally, hormone found in the sinus gland of isopods and decapods which controls the blood sugar level. Has a secretagogue action over the amylase released from the midgut gland. May act as a stress hormone and may be involved in the control of molting and reproduction. The polypeptide is Crustacean hyperglycemic hormone (Cancer pagurus (Rock crab)).